The primary structure comprises 76 residues: NADH-ubiquinone oxidoreductase chain 4L (76 aa).

3 helical membrane-spanning segments follow: residues 1–21, 29–49, and 56–76; these read MTPVHFSFTSAFILGLMGLAF, ALLCLEGMMLSLFIALSLWAL, and YSVAPMLLLAFSACEASAGLA.

This sequence belongs to the complex I subunit 4L family.

The protein localises to the mitochondrion membrane. The enzyme catalyses a ubiquinone + NADH + 5 H(+)(in) = a ubiquinol + NAD(+) + 4 H(+)(out). Functionally, core subunit of the mitochondrial membrane respiratory chain NADH dehydrogenase (Complex I) which catalyzes electron transfer from NADH through the respiratory chain, using ubiquinone as an electron acceptor. Part of the enzyme membrane arm which is embedded in the lipid bilayer and involved in proton translocation. This is NADH-ubiquinone oxidoreductase chain 4L (MT-ND4L) from Oncorhynchus masou (Cherry salmon).